Consider the following 203-residue polypeptide: E3 ubiquitin-protein ligase RNF152 (203 aa).

Residues 12–55 (CQICFNYYSPRRRPKLLDCKHTCCSVCLQQMRTSQKDVRCPWCR) form an RING-type zinc finger. Residues 106–165 (ISKERTLLPGDMGCRLLPGSQQKSLTVVTIPAEQQPLQGGAPQEAVEEEPDRRGVAKSST) form a necessary for interaction with RRAGA region. The segment at 140–159 (QPLQGGAPQEAVEEEPDRRG) is disordered. Residues 167–187 (SGVCTVILVACVLVFLLGIVL) traverse the membrane as a helical segment.

The protein belongs to the RNF152 family. In terms of assembly, interacts with RRAGA (inactive GDP-bound form); stimulated by amino acid starvation. Interacts with SEC16A. In terms of processing, ubiquitinated. Autoubiquitinated in vitro, leading to its degradation by the proteasome.

The protein localises to the lysosome membrane. The catalysed reaction is S-ubiquitinyl-[E2 ubiquitin-conjugating enzyme]-L-cysteine + [acceptor protein]-L-lysine = [E2 ubiquitin-conjugating enzyme]-L-cysteine + N(6)-ubiquitinyl-[acceptor protein]-L-lysine.. It participates in protein modification; protein ubiquitination. E3 ubiquitin-protein ligase that acts as a negative regulator of mTORC1 signaling by mediating ubiquitination of RagA/RRAGA and RHEB. Catalyzes 'Lys-63'-linked polyubiquitination of RagA/RRAGA in response to amino acid starvation, thereby regulating mTORC1 signaling. Also mediates monoubiquitination of RHEB, promoting its association with the TSC-TBC complex and subsequent inhibition. Also mediates 'Lys-48'-linked polyubiquitination of target proteins and their subsequent targeting to the proteasome for degradation. Induces apoptosis when overexpressed. The polypeptide is E3 ubiquitin-protein ligase RNF152 (Rattus norvegicus (Rat)).